We begin with the raw amino-acid sequence, 475 residues long: L-seryl-tRNA(Sec) selenium transferase (475 aa).

N6-(pyridoxal phosphate)lysine is present on K295.

The protein belongs to the SelA family. Requires pyridoxal 5'-phosphate as cofactor.

It is found in the cytoplasm. The enzyme catalyses L-seryl-tRNA(Sec) + selenophosphate + H(+) = L-selenocysteinyl-tRNA(Sec) + phosphate. The protein operates within aminoacyl-tRNA biosynthesis; selenocysteinyl-tRNA(Sec) biosynthesis; selenocysteinyl-tRNA(Sec) from L-seryl-tRNA(Sec) (bacterial route): step 1/1. In terms of biological role, converts seryl-tRNA(Sec) to selenocysteinyl-tRNA(Sec) required for selenoprotein biosynthesis. In Desulfovibrio desulfuricans (strain ATCC 27774 / DSM 6949 / MB), this protein is L-seryl-tRNA(Sec) selenium transferase.